A 321-amino-acid chain; its full sequence is uncharacterized protein (321 aa).

Position 28-35 (Gly-28–Thr-35) interacts with ATP.

It belongs to the archaeal ATPase family.

This is an uncharacterized protein from Pyrococcus horikoshii (strain ATCC 700860 / DSM 12428 / JCM 9974 / NBRC 100139 / OT-3).